Here is a 471-residue protein sequence, read N- to C-terminus: Serine hydroxymethyltransferase 4 (471 aa).

At M1 the chain carries N-acetylmethionine. S39 contributes to the L-serine binding site. Pemetrexed-binding residues include S39, Y59, and E61. Residues E61 and Y69 each coordinate L-serine. Residues 105–107, H134, S190, and H218 each bind pemetrexed; that span reads SGS. L-serine-binding residues include H218 and K244. The residue at position 244 (K244) is an N6-(pyridoxal phosphate)lysine. G290 provides a ligand contact to pemetrexed. K373 lines the methotrexate pocket. Residue R389 coordinates L-serine. Residue R389 participates in pemetrexed binding.

It belongs to the SHMT family. As to quaternary structure, homotetramer. Interacts with UBP16. Pyridoxal 5'-phosphate is required as a cofactor. In terms of tissue distribution, mostly expressed in flowers, less abundant in roots, inflorescence stems, and siliques, and barely detectable in leaves.

It is found in the cytoplasm. It carries out the reaction (6R)-5,10-methylene-5,6,7,8-tetrahydrofolate + glycine + H2O = (6S)-5,6,7,8-tetrahydrofolate + L-serine. The protein operates within one-carbon metabolism; tetrahydrofolate interconversion. With respect to regulation, inhibited by the antifolate drugs methotrexate and pemetrexed. Its function is as follows. Catalyzes the interconversion of serine and glycine with the conversion of tetrahydrofolate (THF) into 5,10-methylene-THF. This chain is Serine hydroxymethyltransferase 4, found in Arabidopsis thaliana (Mouse-ear cress).